The sequence spans 199 residues: 7-methyl-GTP pyrophosphatase (199 aa).

Aspartate 74 (proton acceptor) is an active-site residue.

Belongs to the Maf family. YceF subfamily. The cofactor is a divalent metal cation.

Its subcellular location is the cytoplasm. It carries out the reaction N(7)-methyl-GTP + H2O = N(7)-methyl-GMP + diphosphate + H(+). Its function is as follows. Nucleoside triphosphate pyrophosphatase that hydrolyzes 7-methyl-GTP (m(7)GTP). May have a dual role in cell division arrest and in preventing the incorporation of modified nucleotides into cellular nucleic acids. This Albidiferax ferrireducens (strain ATCC BAA-621 / DSM 15236 / T118) (Rhodoferax ferrireducens) protein is 7-methyl-GTP pyrophosphatase.